The following is a 688-amino-acid chain: Polyribonucleotide nucleotidyltransferase (688 aa).

Asp-484 and Asp-490 together coordinate Mg(2+). Positions 550–609 (PTTEIFNVAPDKIVEIIGQGGRVIKEIVEKFEVKIDLNKPSGEVKIMGNKERVLKTKEFI) constitute a KH domain. The S1 motif domain occupies 626–688 (DEVLEAQVKR…NKGKIALDLA (63 aa)).

This sequence belongs to the polyribonucleotide nucleotidyltransferase family. Mg(2+) is required as a cofactor.

Its subcellular location is the cytoplasm. The enzyme catalyses RNA(n+1) + phosphate = RNA(n) + a ribonucleoside 5'-diphosphate. Its function is as follows. Involved in mRNA degradation. Catalyzes the phosphorolysis of single-stranded polyribonucleotides processively in the 3'- to 5'-direction. The protein is Polyribonucleotide nucleotidyltransferase of Helicobacter pylori (strain ATCC 700392 / 26695) (Campylobacter pylori).